The primary structure comprises 358 residues: F-box/kelch-repeat protein SKIP4 (358 aa).

The 48-residue stretch at alanine 20–glutamate 67 folds into the F-box domain. Kelch repeat units lie at residues leucine 78–lysine 122, arginine 123–glycine 171, isoleucine 173–glycine 219, arginine 220–glutamine 269, phenylalanine 271–asparagine 307, and serine 308–serine 355.

In terms of assembly, part of a SCF (SKP1-cullin-F-box) protein ligase complex. Interacts with SKP1A/ASK1.

Its pathway is protein modification; protein ubiquitination. This chain is F-box/kelch-repeat protein SKIP4 (SKIP4), found in Arabidopsis thaliana (Mouse-ear cress).